A 103-amino-acid chain; its full sequence is Co-chaperonin GroES (103 aa).

It belongs to the GroES chaperonin family. As to quaternary structure, heptamer of 7 subunits arranged in a ring. Interacts with the chaperonin GroEL.

The protein resides in the cytoplasm. In terms of biological role, together with the chaperonin GroEL, plays an essential role in assisting protein folding. The GroEL-GroES system forms a nano-cage that allows encapsulation of the non-native substrate proteins and provides a physical environment optimized to promote and accelerate protein folding. GroES binds to the apical surface of the GroEL ring, thereby capping the opening of the GroEL channel. This is Co-chaperonin GroES from Synechococcus sp. (strain CC9311).